The following is a 111-amino-acid chain: Photosystem II reaction center Psb28 protein (111 aa).

It belongs to the Psb28 family. As to quaternary structure, part of the photosystem II complex.

It is found in the cellular thylakoid membrane. This is Photosystem II reaction center Psb28 protein from Crocosphaera subtropica (strain ATCC 51142 / BH68) (Cyanothece sp. (strain ATCC 51142)).